The sequence spans 331 residues: Flavonol synthase 1 (331 aa).

In terms of domain architecture, Fe2OG dioxygenase spans 191–292; it reads DAIELLLKIN…RMSWPVFCSP (102 aa). 3 residues coordinate Fe cation: His-217, Asp-219, and His-273. Residue Arg-283 coordinates 2-oxoglutarate.

This sequence belongs to the iron/ascorbate-dependent oxidoreductase family. Requires L-ascorbate as cofactor. Fe(2+) is required as a cofactor. As to expression, expressed in young cromes.

It carries out the reaction a (2R,3R)-dihydroflavonol + 2-oxoglutarate + O2 = a flavonol + succinate + CO2 + H2O. It catalyses the reaction (2R,3R)-dihydrokaempferol + 2-oxoglutarate + O2 = kaempferol + succinate + CO2 + H2O + H(+). The catalysed reaction is (2R,3R)-dihydroquercetin + 2-oxoglutarate + O2 = quercetin + succinate + CO2 + H2O + H(+). The enzyme catalyses (2R,3R)-dihydromyricetin + 2-oxoglutarate + O2 = myricetin + succinate + CO2 + H2O + H(+). It participates in flavonoid metabolism. Functionally, catalyzes the formation of flavonols from dihydroflavonols. Can act on dihydrokaempferol to produce kaempferol, on dihydroquercetin to produce quercitin and on dihydromyricetin to produce myricetin. The sequence is that of Flavonol synthase 1 from Crocosmia x crocosmiiflora (Montbretia).